The following is a 206-amino-acid chain: Ribosomal RNA small subunit methyltransferase G (206 aa).

Residues G74, L79, 125–126, and R140 each bind S-adenosyl-L-methionine; that span reads VE.

It belongs to the methyltransferase superfamily. RNA methyltransferase RsmG family.

It is found in the cytoplasm. It carries out the reaction guanosine(527) in 16S rRNA + S-adenosyl-L-methionine = N(7)-methylguanosine(527) in 16S rRNA + S-adenosyl-L-homocysteine. Functionally, specifically methylates the N7 position of guanine in position 527 of 16S rRNA. The chain is Ribosomal RNA small subunit methyltransferase G from Shewanella sp. (strain MR-7).